The sequence spans 522 residues: Light-independent protochlorophyllide reductase subunit B (522 aa).

A [4Fe-4S] cluster-binding site is contributed by Asp36. Asp290 acts as the Proton donor in catalysis. Residue 425–426 (GL) participates in substrate binding.

It belongs to the ChlB/BchB/BchZ family. Protochlorophyllide reductase is composed of three subunits; ChlL, ChlN and ChlB. Forms a heterotetramer of two ChlB and two ChlN subunits. [4Fe-4S] cluster is required as a cofactor.

The enzyme catalyses chlorophyllide a + oxidized 2[4Fe-4S]-[ferredoxin] + 2 ADP + 2 phosphate = protochlorophyllide a + reduced 2[4Fe-4S]-[ferredoxin] + 2 ATP + 2 H2O. It functions in the pathway porphyrin-containing compound metabolism; chlorophyll biosynthesis (light-independent). Component of the dark-operative protochlorophyllide reductase (DPOR) that uses Mg-ATP and reduced ferredoxin to reduce ring D of protochlorophyllide (Pchlide) to form chlorophyllide a (Chlide). This reaction is light-independent. The NB-protein (ChlN-ChlB) is the catalytic component of the complex. This chain is Light-independent protochlorophyllide reductase subunit B, found in Synechococcus sp. (strain CC9311).